Reading from the N-terminus, the 489-residue chain is Cytochrome P450 monooxygenase prhB (489 aa).

Helical transmembrane passes span 1–21 (MFSFGFLITAVVFWVVTKVIY), 212–232 (VIFQCLGFFPWIKEPLVMIFA), and 287–307 (LFIGAGAESTATLLMGVAYLL). Asparagine 347 and asparagine 379 each carry an N-linked (GlcNAc...) asparagine glycan. Heme is bound at residue cysteine 431.

It belongs to the cytochrome P450 family. The cofactor is heme.

It is found in the membrane. It functions in the pathway secondary metabolite biosynthesis; terpenoid biosynthesis. Cytochrome P450 monooxygenase; part of the gene cluster that mediates the biosynthesis of paraherquonin, a meroterpenoid with a unique, highly congested hexacyclic molecular architecture. The first step of the pathway is the synthesis of 3,5-dimethylorsellinic acid (DMOA) by the polyketide synthase prhL. Synthesis of DMOA is followed by farnesylation by the prenyltransferase prhE, methylesterification by the methyl-transferase prhM, epoxidation of the prenyl chain by the flavin-dependent monooxygenase prhF, and cyclization of the farnesyl moiety by the terpene cyclase prhH, to yield the tetracyclic intermediate, protoaustinoid A. The short chain dehydrogenase prhI then oxidizes the C-3 alcohol group of the terpene cyclase product to transform protoaustinoid A into protoaustinoid B. The FAD-binding monooxygenase prhJ catalyzes the oxidation of protoaustinoid B into preaustinoid A which is further oxidized into preaustinoid A1 by FAD-binding monooxygenase phrK. Finally, prhA leads to berkeleydione via the berkeleyone B intermediate. PrhA is a multifunctional dioxygenase that first desaturates at C5-C6 to form berkeleyone B, followed by rearrangement of the A/B-ring to form the cycloheptadiene moiety in berkeleydione. Berkeleydione serves as the key intermediate for the biosynthesis of paraherquonin as well as many other meroterpenoids. The cytochrome P450 monooxygenases prhB, prhD, and prhN, as well as the isomerase prhC, are probably involved in the late stage of paraherquonin biosynthesis, after the production of berkeleydione. Especially prhC might be a multifunctional enzyme that catalyzes the D-ring expansion via intramolecular methoxy rearrangement, as well as the hydrolysis of the expanded D-ring. The sequence is that of Cytochrome P450 monooxygenase prhB from Penicillium brasilianum.